Consider the following 183-residue polypeptide: Alkyl hydroperoxide reductase AhpD (183 aa).

Cys-132 (proton donor) is an active-site residue. Cysteines 132 and 135 form a disulfide. The Cysteine sulfenic acid (-SOH) intermediate role is filled by Cys-135.

This sequence belongs to the AhpD family.

The catalysed reaction is N(6)-[(R)-dihydrolipoyl]-L-lysyl-[lipoyl-carrier protein] + a hydroperoxide = N(6)-[(R)-lipoyl]-L-lysyl-[lipoyl-carrier protein] + an alcohol + H2O. Functionally, antioxidant protein with alkyl hydroperoxidase activity. Required for the reduction of the AhpC active site cysteine residues and for the regeneration of the AhpC enzyme activity. This is Alkyl hydroperoxide reductase AhpD from Caulobacter vibrioides (strain ATCC 19089 / CIP 103742 / CB 15) (Caulobacter crescentus).